The chain runs to 436 residues: Glutamyl-tRNA reductase (436 aa).

Residues 49–52 (TCNR), S109, 114–116 (EPQ), and Q120 contribute to the substrate site. The active-site Nucleophile is the C50. 189–194 (GAGEMC) contributes to the NADP(+) binding site.

This sequence belongs to the glutamyl-tRNA reductase family. Homodimer.

The enzyme catalyses (S)-4-amino-5-oxopentanoate + tRNA(Glu) + NADP(+) = L-glutamyl-tRNA(Glu) + NADPH + H(+). It participates in porphyrin-containing compound metabolism; protoporphyrin-IX biosynthesis; 5-aminolevulinate from L-glutamyl-tRNA(Glu): step 1/2. Catalyzes the NADPH-dependent reduction of glutamyl-tRNA(Glu) to glutamate 1-semialdehyde (GSA). The chain is Glutamyl-tRNA reductase from Pelobacter propionicus (strain DSM 2379 / NBRC 103807 / OttBd1).